Here is a 357-residue protein sequence, read N- to C-terminus: Retinoic acid-induced protein 3 (357 aa).

Topologically, residues 1 to 33 (MATTVPDGCRNGLKSKYYRLCDKAEAWGIVLET) are extracellular. Residues 34–54 (VATAGVVTSVAFMLTLPILVC) form a helical membrane-spanning segment. The Cytoplasmic portion of the chain corresponds to 55–68 (KVQDSNRRKMLPTQ). Residues 69-89 (FLFLLGVLGIFGLTFAFIIGL) traverse the membrane as a helical segment. The Extracellular portion of the chain corresponds to 90-97 (DGSTGPTR). A helical membrane pass occupies residues 98 to 118 (FFLFGILFSICFSCLLAHAVS). Residues 119 to 129 (LTKLVRGRKPL) lie on the Cytoplasmic side of the membrane. The chain crosses the membrane as a helical span at residues 130–150 (SLLVILGLAVGFSLVQDVIAI). The Extracellular segment spans residues 151 to 176 (EYIVLTMNRTNVNVFSELSAPRRNED). N158 carries an N-linked (GlcNAc...) asparagine glycan. Residues 177-197 (FVLLLTYVLFLMALTFLMSSF) form a helical membrane-spanning segment. Topologically, residues 198–212 (TFCGSFTGWKRHGAH) are cytoplasmic. Residues 213-233 (IYLTMLLSIAIWVAWITLLML) traverse the membrane as a helical segment. Over 234–247 (PDFDRRWDDTILSS) the chain is Extracellular. Residues 248-268 (ALAANGWVFLLAYVSPEFWLL) form a helical membrane-spanning segment. At 269 to 357 (TKQRNPMDYP…KDYEVKKEGS (89 aa)) the chain is on the cytoplasmic side. S301 is modified (phosphoserine). Residues Y317 and Y320 each carry the phosphotyrosine modification. At S345 the chain carries Phosphoserine. Phosphotyrosine occurs at positions 347 and 350.

It belongs to the G-protein coupled receptor 3 family. As to quaternary structure, interacts (via its transmembrane domain) with EGFR. Post-translationally, phosphorylated in two conserved double-tyrosine motifs, Tyr-317/Tyr-320 and Tyr-347/Tyr-350, by EGFR; leading to inactivation of the tumor suppressive function of GPRC5A in lung cancer cells. Tyr-317 and Tyr-320 are the preferred residues responsible for EGFR-mediated GPRC5A phosphorylation. Expressed at high level in fetal and adult lung tissues but repressed in most human lung cancers. Constitutively expressed in fetal kidney and adult placenta, kidney, prostate, testis, ovary, small intestine, colon, stomach, and spinal cord at low to moderate levels. Not detectable in fetal heart, brain, and liver and adult heart, brain, liver, skeletal muscle, pancreas, spleen, thymus, and peripheral leukocytes. According to PubMed:10783259, expressed at low but detectable level in pancreas and heart.

The protein localises to the cell membrane. It localises to the cytoplasmic vesicle membrane. Orphan receptor. Could be involved in modulating differentiation and maintaining homeostasis of epithelial cells. This retinoic acid-inducible GPCR provide evidence for a possible interaction between retinoid and G-protein signaling pathways. Functions as a negative modulator of EGFR signaling. May act as a lung tumor suppressor. This chain is Retinoic acid-induced protein 3 (GPRC5A), found in Homo sapiens (Human).